A 750-amino-acid polypeptide reads, in one-letter code: Polyribonucleotide nucleotidyltransferase (750 aa).

Mg(2+) is bound by residues Asp-523 and Asp-529. In terms of domain architecture, KH spans 589–648 (PRVTSISIPVDKIGEVIGPKGKMINSITEETGAEITIEDDGTIYVGAADGPSAEAAIDKI). Positions 660-729 (GERFLGTVVK…SRGKISLVVV (70 aa)) constitute an S1 motif domain.

Belongs to the polyribonucleotide nucleotidyltransferase family. Mg(2+) serves as cofactor.

Its subcellular location is the cytoplasm. It catalyses the reaction RNA(n+1) + phosphate = RNA(n) + a ribonucleoside 5'-diphosphate. Involved in mRNA degradation. Catalyzes the phosphorolysis of single-stranded polyribonucleotides processively in the 3'- to 5'-direction. The sequence is that of Polyribonucleotide nucleotidyltransferase from Saccharopolyspora erythraea (strain ATCC 11635 / DSM 40517 / JCM 4748 / NBRC 13426 / NCIMB 8594 / NRRL 2338).